The following is a 373-amino-acid chain: Diels-Alderase (373 aa).

This sequence belongs to the Diels-Alderase family.

The catalysed reaction is (5S)-3-[(2E,6R,8E,10E,12E)-2,6-dimethyltetradeca-2,8,10,12-tetraenoyl]-5-(hydroxymethyl)pyrrolidine-2,4-dione = trichosetin. Its pathway is mycotoxin biosynthesis. Its function is as follows. Hybrid PKS-NRPS synthetase; part of the gene cluster that mediates the biosynthesis of trichosetin, a trans-fused decalin-containing tetramic acid with antimicrobial activity. The PKS module of PKS-NRPS1 together with the enoylreductase (ER) catalyze the formation of the polyketide unit which is then conjugated to L-serine by the condensation domain of the PKS-NRPS1 NRPS module. Activity of the Dieckmann cyclase domain (RED) results in release of the Dieckmann product intermediate. Diels-Alderase (DA) is involved in endo-selective Diels-Alder cycloaddition to form the decalin ring, leading to the production of N-desmethylequisetin also called trichosetin. The cluster does not contain the equisetin N-methyltransferase and consequently, trichosetin is isolated as final product. This is Diels-Alderase from Gibberella fujikuroi (strain CBS 195.34 / IMI 58289 / NRRL A-6831) (Bakanae and foot rot disease fungus).